The chain runs to 342 residues: Phosphate acyltransferase (342 aa).

The protein belongs to the PlsX family. As to quaternary structure, homodimer. Probably interacts with PlsY.

Its subcellular location is the cytoplasm. The enzyme catalyses a fatty acyl-[ACP] + phosphate = an acyl phosphate + holo-[ACP]. The protein operates within lipid metabolism; phospholipid metabolism. Its function is as follows. Catalyzes the reversible formation of acyl-phosphate (acyl-PO(4)) from acyl-[acyl-carrier-protein] (acyl-ACP). This enzyme utilizes acyl-ACP as fatty acyl donor, but not acyl-CoA. The sequence is that of Phosphate acyltransferase from Pelotomaculum thermopropionicum (strain DSM 13744 / JCM 10971 / SI).